A 562-amino-acid chain; its full sequence is NAD-dependent malic enzyme (562 aa).

Tyr101 acts as the Proton donor in catalysis. Arg154 lines the NAD(+) pocket. The active-site Proton acceptor is the Lys172. The a divalent metal cation site is built by Glu243, Asp244, and Asp267. Positions 267 and 415 each coordinate NAD(+).

The protein belongs to the malic enzymes family. Homotetramer. Mg(2+) is required as a cofactor. The cofactor is Mn(2+).

The enzyme catalyses (S)-malate + NAD(+) = pyruvate + CO2 + NADH. It catalyses the reaction oxaloacetate + H(+) = pyruvate + CO2. The protein is NAD-dependent malic enzyme of Shewanella halifaxensis (strain HAW-EB4).